Consider the following 336-residue polypeptide: Potassium channel subfamily K member 1 (336 aa).

Residues 1 to 20 are Cytoplasmic-facing; sequence MLQSLAGSSCVRLVERHRSA. Residues 21–41 form a helical membrane-spanning segment; it reads WCFGFLVLGYLLYLVFGAVVF. The Extracellular portion of the chain corresponds to 42-103; that stretch reads SSVELPYEDL…SNASGNWNWD (62 aa). The N-linked (GlcNAc...) asparagine glycan is linked to asparagine 95. An intramembrane region (helical) is located at residues 104–116; sequence FTSALFFASTVLS. Residues 117 to 122 lie within the membrane without spanning it; the sequence is TTGYGH. The interval 117–122 is selectivity filter 1; sequence TTGYGH. Residues 123-132 lie on the Extracellular side of the membrane; sequence TVPLSDGGKA. The chain crosses the membrane as a helical span at residues 133–156; that stretch reads FCIIYSVIGIPFTLLFLTAVVQRI. At 157-181 the chain is on the cytoplasmic side; the sequence is TVHVTRRPVLYFHIRWGFSKQVVAI. A helical membrane pass occupies residues 182 to 202; it reads VHAVLLGFVTVSCFFFIPAAV. Residues 203-211 lie on the Extracellular side of the membrane; it reads FSVLEDDWN. The helical intramembrane region spans 212 to 224; it reads FLESFYFCFISLS. The tract at residues 225–230 is selectivity filter 2; it reads TIGLGD. An intramembrane segment occupies 225-231; that stretch reads TIGLGDY. Residues 232–243 are Extracellular-facing; the sequence is VPGEGYNQKFRE. The helical transmembrane segment at 244–267 threads the bilayer; sequence LYKIGITCYLLLGLIAMLVVLETF. Residues 268 to 336 are Cytoplasmic-facing; that stretch reads CELHELKKFR…SACVDGPANH (69 aa). Lysine 274 participates in a covalent cross-link: Glycyl lysine isopeptide (Lys-Gly) (interchain with G-Cter in SUMO). The important for intracellular retention in recycling endosomes stretch occupies residues 293–299; the sequence is IIEHDQL. Position 326 is a phosphoserine (serine 326).

It belongs to the two pore domain potassium channel (TC 1.A.1.8) family. As to quaternary structure, homodimer; disulfide-linked. Heterodimer with KCNK2; disulfide-linked. In astrocytes, forms mostly heterodimeric potassium channels with KCNK2, with only a minor proportion of functional channels containing homodimeric KCNK1. Interacts with KCNK3 and KCNK9, forming functional heterodimeric channels. Interacts with GNG4. Identified in a complex with PSD and ARF6; interacts only with PSD that is bound to ARF6. Interacts with UBE2I. In terms of processing, sumoylation is controversial. Sumoylated by UBE2I. Not sumoylated when expressed in xenopus oocytes or mammalian cells. Sumoylation inactivates the channel, but does not interfere with expression at the cell membrane. Sumoylation of a single subunit is sufficient to silence the dimeric channel. Sumoylation of KCNK1 is sufficient to silence heterodimeric channels formed by KCNK1 and KCNK3 or KCNK9. Desumoylated by SENP1; this activates the channel. Desumoylated by SENP1; this strongly increases halothane-mediated activation of heterodimeric channels formed with KCNK9. SENP1 treatment has no effect. As to expression, detected in bronchial epithelial cells. Detected in heart left atrium and left ventricle. Detected in cardiac myocytes (at protein level). Widely expressed with high levels in heart, brain and kidney, and lower levels in colon, ovary, placenta, lung and liver. Highly expressed in cerebellum, and detected at lower levels in amygdala, caudate nucleus, brain cortex, hippocampus, putamen, substantia nigra, thalamus, dorsal root ganglion, spinal cord, pituitary, heart, kidney, lung, placenta, pancreas, stomach, small intestine, uterus and prostate. Detected in right and left heart ventricle and atrium, and in heart Purkinje fibers.

The protein localises to the cell membrane. Its subcellular location is the recycling endosome. It localises to the synaptic cell membrane. The protein resides in the cytoplasmic vesicle. It is found in the perikaryon. The protein localises to the cell projection. Its subcellular location is the dendrite. It localises to the apical cell membrane. It carries out the reaction K(+)(in) = K(+)(out). The enzyme catalyses NH4(+)(in) = NH4(+)(out). It catalyses the reaction Na(+)(in) = Na(+)(out). The catalysed reaction is Rb(+)(in) = Rb(+)(out). It carries out the reaction Cs(+)(in) = Cs(+)(out). The enzyme catalyses Li(+)(in) = Li(+)(out). It catalyses the reaction L-glutamate(out) = L-glutamate(in). The catalysed reaction is chloride(in) = chloride(out). Inhibited by Ba(2+) ions and quinidine. Inhibited by quinine. Is slightly inhibited by 10 mM tetraethylammonium (TEA), and only marginally inhibited by 4-aminopyridine, charybdotoxin and dendrotoxin. Lowering the extracellular pH to below 6.5 transiently activates the channel, and then inhibits channel activity. Inhibited when the intracellular pH is decreased down to pH 6.0, but this may be due to indirect effects. In terms of biological role, ion channel that contributes to passive transmembrane potassium transport and to the regulation of the resting membrane potential in brain astrocytes, but also in kidney and in other tissues. Forms dimeric channels through which potassium ions pass in accordance with their electrochemical gradient. The channel is selective for K(+) ions at physiological potassium concentrations and at neutral pH, but becomes permeable to Na(+) at subphysiological K(+) levels and upon acidification of the extracellular medium. The homodimer has very low potassium channel activity, when expressed in heterologous systems, and can function as weakly inward rectifying potassium channel. Channel activity is modulated by activation of serotonin receptors. Heterodimeric channels containing KCNK1 and KCNK2 have much higher activity, and may represent the predominant form in astrocytes. Heterodimeric channels containing KCNK1 and KCNK3 or KCNK9 have much higher activity. Heterodimeric channels formed by KCNK1 and KCNK9 may contribute to halothane-sensitive currents. Mediates outward rectifying potassium currents in dentate gyrus granule cells and contributes to the regulation of their resting membrane potential. Contributes to the regulation of action potential firing in dentate gyrus granule cells and down-regulates their intrinsic excitability. In astrocytes, the heterodimer formed by KCNK1 and KCNK2 is required for rapid glutamate release in response to activation of G-protein coupled receptors, such as F2R and CNR1. Required for normal ion and water transport in the kidney. Contributes to the regulation of the resting membrane potential of pancreatic beta cells. The low channel activity of homodimeric KCNK1 may be due to sumoylation. The low channel activity may be due to rapid internalization from the cell membrane and retention in recycling endosomes. Permeable to monovalent cations with ion selectivity for K(+) &gt; Rb(+) &gt;&gt; NH4(+) &gt;&gt; Cs(+) = Na(+) = Li(+). This is Potassium channel subfamily K member 1 (KCNK1) from Homo sapiens (Human).